The primary structure comprises 608 residues: X-ray repair cross-complementing protein 6 (608 aa).

Residues 1 to 11 (MSEWESYYKTE) are compositionally biased toward basic and acidic residues. The disordered stretch occupies residues 1–29 (MSEWESYYKTEGEEEEEEEESPDTGGEYK). An N-acetylserine modification is found at Ser2. A Phosphoserine modification is found at Ser2. Phosphoserine; by PRKDC is present on Ser6. Residues 12 to 22 (GEEEEEEEESP) are compositionally biased toward acidic residues. Lys29 functions as the Schiff-base intermediate with DNA; for 5'-deoxyribose-5-phosphate lyase activity in the catalytic mechanism. Position 29 is an N6-acetyllysine (Lys29). Phosphoserine; by PRKDC is present on Ser49. The Ku domain occupies 259–466 (FKLGEDVVLM…IDKMKAIVQK (208 aa)). The interval 275–339 (VQKANKPFPV…EETEELKRFD (65 aa)) is DNA-binding. Lys315 is covalently cross-linked (Glycyl lysine isopeptide (Lys-Gly) (interchain with G-Cter in SUMO2)). N6-acetyllysine is present on residues Lys329, Lys336, and Lys459. Residues 371–480 (SLVSGSSTLF…YRSDSFENPV (110 aa)) form an interaction with XRCC5 region. A phosphoserine mark is found at Ser475, Ser518, and Ser548. Residues 534–557 (PEGKVAKRKQDDEGSTSKKPKVEL) are disordered. A compositionally biased stretch (basic and acidic residues) spans 537–557 (KVAKRKQDDEGSTSKKPKVEL). The tract at residues 548–607 (STSKKPKVELSEEELKAHFRKGTLGKLTVPTLKDICKAHGLKSGPKKQELLDALIRHLEK) is interaction with DEAF1. Lys554 participates in a covalent cross-link: Glycyl lysine isopeptide (Lys-Gly) (interchain with G-Cter in SUMO2). The residue at position 558 (Ser558) is a Phosphoserine. Lys568 is subject to N6,N6,N6-trimethyllysine. One can recognise an SAP domain in the interval 571-605 (LGKLTVPTLKDICKAHGLKSGPKKQELLDALIRHL). An interaction with BAX region spans residues 576 to 581 (VPTLKD).

This sequence belongs to the ku70 family. As to quaternary structure, heterodimer composed of XRCC5/Ku80 and XRCC6/Ku70. Component of the core long-range non-homologous end joining (NHEJ) complex (also named DNA-PK complex) composed of PRKDC, LIG4, XRCC4, XRCC6/Ku70, XRCC5/Ku86 and NHEJ1/XLF. Additional component of the NHEJ complex includes PAXX. Following autophosphorylation, PRKDC dissociates from DNA, leading to formation of the short-range NHEJ complex, composed of LIG4, XRCC4, XRCC6/Ku70, XRCC5/Ku86 and NHEJ1/XLF. The XRCC5-XRCC6 dimer also associates with NAA15, and this complex binds to the osteocalcin promoter and activates osteocalcin expression. In addition, XRCC6 interacts with the osteoblast-specific transcription factors MSX2, RUNX2 and DLX5. Interacts with ELF3. Interacts with ATP23. The XRCC5-XRRC6 dimer associates in a DNA-dependent manner with APEX1. Binds to CDK9. Identified in a complex with DEAF1 and XRCC5. Interacts with DEAF1 (via the SAND domain); the interaction is direct and may be inhibited by DNA-binding. Interacts with CLU. Interacts with NR4A3; the DNA-dependent protein kinase complex DNA-PK phosphorylates and activates NR4A3 and prevents NR4A3 ubiquitinylation and degradation. Interacts with CYREN (via KBM motif). Interacts (via N-terminus) with HSF1 (via N-terminus); this interaction is direct and prevents XRCC5/XRCC6 heterodimeric binding and non-homologous end joining (NHEJ) repair activities induced by ionizing radiation (IR). Part of the HDP-RNP complex composed of at least HEXIM1, PRKDC, XRCC5, XRCC6, paraspeckle proteins (SFPQ, NONO, PSPC1, RBM14, and MATR3) and NEAT1 RNA. Interacts with HMBOX1. Interacts with ATF7. Interacts with APLF (via KBM motif). Interacts with WRN (via KBM motif). The XRCC5-XRCC6 dimer associates with ALKBH2. Interacts with TPRN; TPRN interacts with a number of DNA damage response proteins, is recruited to sites of DNA damage and may play a role in DNA damage repair. When not acetylated, interacts with BAX. Interacts with ERCC6L2. Post-translationally, phosphorylation by PRKDC may enhance helicase activity. Phosphorylation of Ser-49 does not affect DNA repair. In terms of processing, ADP-ribosylated by PARP3. Methylation by SETD4 leads to accumulation in the cytoplasm and is a prerequisite for acetylation, possibly due to the change of subcellular from the nucleus to the cytosol initiated by methylation, acetylation occurring in the cytosol. Post-translationally, acetylation can be catalyzed in vitro by CREBBP/CBP and KAT2B/PCAF.

The protein resides in the nucleus. The protein localises to the chromosome. It localises to the cytoplasm. Single-stranded DNA-dependent ATP-dependent helicase that plays a key role in DNA non-homologous end joining (NHEJ) by recruiting DNA-PK to DNA. Required for double-strand break repair and V(D)J recombination. Also has a role in chromosome translocation. Has a role in chromosome translocation. The DNA helicase II complex binds preferentially to fork-like ends of double-stranded DNA in a cell cycle-dependent manner. It works in the 3'-5' direction. During NHEJ, the XRCC5-XRRC6 dimer performs the recognition step: it recognizes and binds to the broken ends of the DNA and protects them from further resection. Binding to DNA may be mediated by XRCC6. The XRCC5-XRRC6 dimer acts as a regulatory subunit of the DNA-dependent protein kinase complex DNA-PK by increasing the affinity of the catalytic subunit PRKDC to DNA by 100-fold. The XRCC5-XRRC6 dimer is probably involved in stabilizing broken DNA ends and bringing them together. The assembly of the DNA-PK complex to DNA ends is required for the NHEJ ligation step. Probably also acts as a 5'-deoxyribose-5-phosphate lyase (5'-dRP lyase), by catalyzing the beta-elimination of the 5' deoxyribose-5-phosphate at an abasic site near double-strand breaks. 5'-dRP lyase activity allows to 'clean' the termini of abasic sites, a class of nucleotide damage commonly associated with strand breaks, before such broken ends can be joined. The XRCC5-XRRC6 dimer together with APEX1 acts as a negative regulator of transcription. In association with NAA15, the XRCC5-XRRC6 dimer binds to the osteocalcin promoter and activates osteocalcin expression. Plays a role in the regulation of DNA virus-mediated innate immune response by assembling into the HDP-RNP complex, a complex that serves as a platform for IRF3 phosphorylation and subsequent innate immune response activation through the cGAS-STING pathway. Negatively regulates apoptosis by interacting with BAX and sequestering it from the mitochondria. Might have deubiquitination activity, acting on BAX. In Mus musculus (Mouse), this protein is X-ray repair cross-complementing protein 6 (Xrcc6).